Reading from the N-terminus, the 241-residue chain is ATP synthase subunit 4, mitochondrial (241 aa).

A mitochondrion-targeting transit peptide spans 1 to 35 (MASRLARTAVGAARLRPSVVPRVLPALSTVASPRY).

This sequence belongs to the eukaryotic ATPase B chain family. F-type ATPases have 2 components, CF(1) - the catalytic core - and CF(0) - the membrane proton channel. In yeast, the dimeric form of ATP synthase consists of 17 polypeptides: alpha, beta, gamma, delta, epsilon, 4 (B), 5 (OSCP), 6 (A), 8, 9 (C), d, E (Tim11), f, g, h, i/j and k.

Its subcellular location is the mitochondrion. It localises to the mitochondrion inner membrane. Its function is as follows. Mitochondrial membrane ATP synthase (F(1)F(0) ATP synthase or Complex V) produces ATP from ADP in the presence of a proton gradient across the membrane which is generated by electron transport complexes of the respiratory chain. F-type ATPases consist of two structural domains, F(1) - containing the extramembraneous catalytic core, and F(0) - containing the membrane proton channel, linked together by a central stalk and a peripheral stalk. During catalysis, ATP synthesis in the catalytic domain of F(1) is coupled via a rotary mechanism of the central stalk subunits to proton translocation. Part of the complex F(0) domain and the peripheric stalk, which acts as a stator to hold the catalytic alpha(3)beta(3) subcomplex and subunit a/atp6 static relative to the rotary elements. This is ATP synthase subunit 4, mitochondrial (atp-3) from Neurospora crassa (strain ATCC 24698 / 74-OR23-1A / CBS 708.71 / DSM 1257 / FGSC 987).